The primary structure comprises 439 residues: GTPase Der (439 aa).

EngA-type G domains lie at 4–169 (AMVA…PEND) and 177–352 (IKIA…EEYN). Residues 10 to 17 (GRPNVGKS), 57 to 61 (DTGGL), 120 to 123 (NKVD), 183 to 190 (GRPNVGKS), 230 to 234 (DTAGI), and 295 to 298 (NKWD) each bind GTP. One can recognise a KH-like domain in the interval 353-437 (KRITTGLLNN…PIVISTKKRG (85 aa)).

It belongs to the TRAFAC class TrmE-Era-EngA-EngB-Septin-like GTPase superfamily. EngA (Der) GTPase family. In terms of assembly, associates with the 50S ribosomal subunit.

GTPase that plays an essential role in the late steps of ribosome biogenesis. This chain is GTPase Der, found in Caldanaerobacter subterraneus subsp. tengcongensis (strain DSM 15242 / JCM 11007 / NBRC 100824 / MB4) (Thermoanaerobacter tengcongensis).